A 242-amino-acid chain; its full sequence is 1-(5-phosphoribosyl)-5-[(5-phosphoribosylamino)methylideneamino] imidazole-4-carboxamide isomerase (242 aa).

Asp-10 (proton acceptor) is an active-site residue.

Belongs to the HisA/HisF family.

Its subcellular location is the cytoplasm. The catalysed reaction is 1-(5-phospho-beta-D-ribosyl)-5-[(5-phospho-beta-D-ribosylamino)methylideneamino]imidazole-4-carboxamide = 5-[(5-phospho-1-deoxy-D-ribulos-1-ylimino)methylamino]-1-(5-phospho-beta-D-ribosyl)imidazole-4-carboxamide. It participates in amino-acid biosynthesis; L-histidine biosynthesis; L-histidine from 5-phospho-alpha-D-ribose 1-diphosphate: step 4/9. The sequence is that of 1-(5-phosphoribosyl)-5-[(5-phosphoribosylamino)methylideneamino] imidazole-4-carboxamide isomerase from Corynebacterium diphtheriae (strain ATCC 700971 / NCTC 13129 / Biotype gravis).